The following is a 218-amino-acid chain: uncharacterized protein (218 aa).

Transmembrane regions (helical) follow at residues 27-49, 57-77, 115-135, 142-162, and 180-200; these read IALE…GFLA, GGVL…GYWV, VFFG…AGIV, FLLY…SLAY, and FSWF…VFHF.

Belongs to the DedA family.

The protein resides in the cell membrane. This is an uncharacterized protein from Synechocystis sp. (strain ATCC 27184 / PCC 6803 / Kazusa).